Here is a 284-residue protein sequence, read N- to C-terminus: UPF0761 membrane protein IL2447 (284 aa).

6 helical membrane passes run 41–61 (MLSL…FPMF), 98–118 (MTAI…SAID), 137–157 (FAVY…GLAA), 178–198 (FVLW…MYQL), 214–234 (VIAA…ITFF), and 247–267 (IPIL…GAVL).

Belongs to the UPF0761 family.

The protein resides in the cell inner membrane. The chain is UPF0761 membrane protein IL2447 from Idiomarina loihiensis (strain ATCC BAA-735 / DSM 15497 / L2-TR).